We begin with the raw amino-acid sequence, 144 residues long: Maximins 3/H5 (144 aa).

The first 18 residues, 1–18, serve as a signal peptide directing secretion; it reads MNFKYIFAVSFLIASAYA. Propeptides lie at residues 19–43 and 74–123; these read RSVQ…REIR and TAEE…KEKR. Leucine amide is present on Leu143.

The protein belongs to the bombinin family. As to expression, expressed by the skin glands.

The protein resides in the secreted. In terms of biological role, maximin-3 shows antibacterial activity against both Gram-positive and Gram-negative bacteria. It also shows antimicrobial activity against the fungus C.albicans, but not against A.flavus nor P.uticale. It has little hemolytic activity. It possess a significant cytotoxicity against tumor cell lines. It possess a significant anti-HIV activity. It shows high spermicidal activity. Its function is as follows. Maximin-H5 shows antibacterial activity only against the Gram-positive bacteria S.aureus. The other bacterial and fungal strains tested were resistant to it. The presence of metal ions, like Zn(2+) and Mg(2+), did not increase its antimicrobial potency. Does not show hemolytic activity (in a concentration up to 80 uM). The chain is Maximins 3/H5 from Bombina maxima (Giant fire-bellied toad).